A 469-amino-acid polypeptide reads, in one-letter code: 3-isopropylmalate dehydratase large subunit (469 aa).

[4Fe-4S] cluster-binding residues include Cys350, Cys410, and Cys413.

It belongs to the aconitase/IPM isomerase family. LeuC type 1 subfamily. In terms of assembly, heterodimer of LeuC and LeuD. [4Fe-4S] cluster serves as cofactor.

It catalyses the reaction (2R,3S)-3-isopropylmalate = (2S)-2-isopropylmalate. It participates in amino-acid biosynthesis; L-leucine biosynthesis; L-leucine from 3-methyl-2-oxobutanoate: step 2/4. Functionally, catalyzes the isomerization between 2-isopropylmalate and 3-isopropylmalate, via the formation of 2-isopropylmaleate. The polypeptide is 3-isopropylmalate dehydratase large subunit (Rhizobium leguminosarum bv. trifolii (strain WSM2304)).